Here is a 97-residue protein sequence, read N- to C-terminus: Antitoxin YafN (97 aa).

It belongs to the phD/YefM antitoxin family. Probably forms a complex with the mRNA interferase YafO which inhibits the mRNA interferase activity.

Antitoxin component of a type II toxin-antitoxin (TA) system. Functions as an mRNA interferase antitoxin; overexpression prevents YafO-mediated cessation of cell growth and inhibition of cell proliferation. The chain is Antitoxin YafN (yafN) from Escherichia coli (strain K12).